Reading from the N-terminus, the 594-residue chain is Protein FAM200C (594 aa).

The sequence is that of Protein FAM200C from Homo sapiens (Human).